The following is a 401-amino-acid chain: Rho-N domain-containing protein 1, chloroplastic (401 aa).

Residues 1–63 (MAMSGTFHLT…VPNRSSFVCR (63 aa)) constitute a chloroplast transit peptide. Disordered regions lie at residues 73-129 (PDFS…PGPR) and 180-361 (KHSG…EEAV). Polar residues-rich tracts occupy residues 102 to 126 (DMLS…TSSP), 210 to 223 (TGNL…DNNA), and 240 to 265 (PRSQ…VTWT). Over residues 266-290 (QKKDTVELHDEPEHEPAYEHEHEPE) the composition is skewed to basic and acidic residues. The segment covering 339–358 (LSDDDESLDDADEDSDEAEE) has biased composition (acidic residues). The stretch at 339 to 371 (LSDDDESLDDADEDSDEAEEEAVKDLSELKLVE) forms a coiled coil.

As to quaternary structure, homodimer or homomultimer. Part of a chloroplastic degradosome-like complex. Interacts with RNE.

Its subcellular location is the plastid. The protein resides in the chloroplast. Its function is as follows. Binds to and supports processing of specific plastid RNAs. Associates via its C-terminal Rho-N domain to single stranded regions of 16S and 23S rRNAs or to rbcL mRNAs. May be involved in targeting transcripts to RNases such as RNE or RNase J. The chain is Rho-N domain-containing protein 1, chloroplastic (RHON1) from Arabidopsis thaliana (Mouse-ear cress).